We begin with the raw amino-acid sequence, 182 residues long: Isopentenyl-diphosphate Delta-isomerase (182 aa).

Residues H25 and H32 each contribute to the Mn(2+) site. Positions 30–164 constitute a Nudix hydrolase domain; it reads LLHLAFSSWL…PWAFSPWMVM (135 aa). C67 is a catalytic residue. Residue H69 participates in Mn(2+) binding. A Mg(2+)-binding site is contributed by E87. Residues E114 and E116 each contribute to the Mn(2+) site. E116 is a catalytic residue.

It belongs to the IPP isomerase type 1 family. Homodimer. Mg(2+) is required as a cofactor. Mn(2+) serves as cofactor.

The protein resides in the cytoplasm. The catalysed reaction is isopentenyl diphosphate = dimethylallyl diphosphate. Its pathway is isoprenoid biosynthesis; dimethylallyl diphosphate biosynthesis; dimethylallyl diphosphate from isopentenyl diphosphate: step 1/1. In terms of biological role, catalyzes the 1,3-allylic rearrangement of the homoallylic substrate isopentenyl (IPP) to its highly electrophilic allylic isomer, dimethylallyl diphosphate (DMAPP). This chain is Isopentenyl-diphosphate Delta-isomerase, found in Escherichia coli O17:K52:H18 (strain UMN026 / ExPEC).